The following is a 90-amino-acid chain: Putative membrane protein insertion efficiency factor (90 aa).

Residues Val68–Arg90 form a disordered region. Residues Gln79 to Arg90 are compositionally biased toward basic and acidic residues.

This sequence belongs to the UPF0161 family.

It localises to the cell membrane. Its function is as follows. Could be involved in insertion of integral membrane proteins into the membrane. This is Putative membrane protein insertion efficiency factor from Lactiplantibacillus plantarum (strain ATCC BAA-793 / NCIMB 8826 / WCFS1) (Lactobacillus plantarum).